A 193-amino-acid polypeptide reads, in one-letter code: Cytochrome c biogenesis ATP-binding export protein CcmA (193 aa).

The 183-residue stretch at 9-191 (LSASGLAILR…AAGFPVTAEV (183 aa)) folds into the ABC transporter domain. 41 to 48 (GANGAGKT) serves as a coordination point for ATP.

This sequence belongs to the ABC transporter superfamily. CcmA exporter (TC 3.A.1.107) family. In terms of assembly, the complex is composed of two ATP-binding proteins (CcmA) and two transmembrane proteins (CcmB).

It is found in the cell inner membrane. It carries out the reaction heme b(in) + ATP + H2O = heme b(out) + ADP + phosphate + H(+). Part of the ABC transporter complex CcmAB involved in the biogenesis of c-type cytochromes; once thought to export heme, this seems not to be the case, but its exact role is uncertain. Responsible for energy coupling to the transport system. The sequence is that of Cytochrome c biogenesis ATP-binding export protein CcmA from Hyphomonas neptunium (strain ATCC 15444).